The primary structure comprises 272 residues: 5'-nucleotidase SurE (272 aa).

The a divalent metal cation site is built by Asp-28, Asp-29, Ser-59, and Asn-115.

The protein belongs to the SurE nucleotidase family. A divalent metal cation is required as a cofactor.

The protein resides in the cytoplasm. The catalysed reaction is a ribonucleoside 5'-phosphate + H2O = a ribonucleoside + phosphate. In terms of biological role, nucleotidase that shows phosphatase activity on nucleoside 5'-monophosphates. This is 5'-nucleotidase SurE from Chlorobium chlorochromatii (strain CaD3).